The sequence spans 78 residues: RNA-binding protein Hfq (78 aa).

One can recognise a Sm domain in the interval 10–69; sequence DPFLNALRREHVPVSIYLVNGIKLQGQVESFDQYVVLLKNTVTQMVYKHAISTVVPARPV.

This sequence belongs to the Hfq family. In terms of assembly, homohexamer.

In terms of biological role, RNA chaperone that binds small regulatory RNA (sRNAs) and mRNAs to facilitate mRNA translational regulation in response to envelope stress, environmental stress and changes in metabolite concentrations. Also binds with high specificity to tRNAs. The sequence is that of RNA-binding protein Hfq from Dechloromonas aromatica (strain RCB).